Here is an 85-residue protein sequence, read N- to C-terminus: Large ribosomal subunit protein bL27 (85 aa).

The disordered stretch occupies residues 1–20 (MATKKAGGSTRNGRDSEAKR).

Belongs to the bacterial ribosomal protein bL27 family.

The chain is Large ribosomal subunit protein bL27 from Actinobacillus succinogenes (strain ATCC 55618 / DSM 22257 / CCUG 43843 / 130Z).